A 306-amino-acid chain; its full sequence is UDP-N-acetylenolpyruvoylglucosamine reductase (306 aa).

One can recognise an FAD-binding PCMH-type domain in the interval 30-216 (RIGGPVPYIL…KSKLIDFSTR (187 aa)). Residue Arg-180 is part of the active site. Ser-230 functions as the Proton donor in the catalytic mechanism. The active site involves Glu-301.

Belongs to the MurB family. It depends on FAD as a cofactor.

The protein resides in the cytoplasm. It carries out the reaction UDP-N-acetyl-alpha-D-muramate + NADP(+) = UDP-N-acetyl-3-O-(1-carboxyvinyl)-alpha-D-glucosamine + NADPH + H(+). Its pathway is cell wall biogenesis; peptidoglycan biosynthesis. Cell wall formation. This Petrotoga mobilis (strain DSM 10674 / SJ95) protein is UDP-N-acetylenolpyruvoylglucosamine reductase.